Reading from the N-terminus, the 170-residue chain is Ribosome maturation factor RimM (170 aa).

One can recognise a PRC barrel domain in the interval Glu-95–Met-168.

Belongs to the RimM family. In terms of assembly, binds ribosomal protein uS19.

It is found in the cytoplasm. In terms of biological role, an accessory protein needed during the final step in the assembly of 30S ribosomal subunit, possibly for assembly of the head region. Essential for efficient processing of 16S rRNA. May be needed both before and after RbfA during the maturation of 16S rRNA. It has affinity for free ribosomal 30S subunits but not for 70S ribosomes. In Oceanobacillus iheyensis (strain DSM 14371 / CIP 107618 / JCM 11309 / KCTC 3954 / HTE831), this protein is Ribosome maturation factor RimM.